Reading from the N-terminus, the 118-residue chain is Large ribosomal subunit protein uL24 (118 aa).

Belongs to the universal ribosomal protein uL24 family. Part of the 50S ribosomal subunit.

Functionally, one of two assembly initiator proteins, it binds directly to the 5'-end of the 23S rRNA, where it nucleates assembly of the 50S subunit. Its function is as follows. One of the proteins that surrounds the polypeptide exit tunnel on the outside of the subunit. The chain is Large ribosomal subunit protein uL24 from Prochlorococcus marinus (strain MIT 9515).